Here is a 645-residue protein sequence, read N- to C-terminus: DNA mismatch repair protein MutL (645 aa).

Disordered regions lie at residues 353-381 and 395-420; these read RPEN…FGPQ and QGEP…PTTG.

Belongs to the DNA mismatch repair MutL/HexB family.

Its function is as follows. This protein is involved in the repair of mismatches in DNA. It is required for dam-dependent methyl-directed DNA mismatch repair. May act as a 'molecular matchmaker', a protein that promotes the formation of a stable complex between two or more DNA-binding proteins in an ATP-dependent manner without itself being part of a final effector complex. This chain is DNA mismatch repair protein MutL, found in Pseudomonas syringae pv. tomato (strain ATCC BAA-871 / DC3000).